Here is a 144-residue protein sequence, read N- to C-terminus: Transcription antitermination protein NusB (144 aa).

This sequence belongs to the NusB family.

Functionally, involved in transcription antitermination. Required for transcription of ribosomal RNA (rRNA) genes. Binds specifically to the boxA antiterminator sequence of the ribosomal RNA (rrn) operons. The polypeptide is Transcription antitermination protein NusB (Paraburkholderia phytofirmans (strain DSM 17436 / LMG 22146 / PsJN) (Burkholderia phytofirmans)).